We begin with the raw amino-acid sequence, 558 residues long: CTP synthase (558 aa).

The segment at 1-271 (MAARQQTKHL…DAYVVRRLGL (271 aa)) is amidoligase domain. CTP is bound at residue Ser-18. A UTP-binding site is contributed by Ser-18. Residues 19–24 (SLGKGL) and Asp-76 each bind ATP. Positions 76 and 145 each coordinate Mg(2+). CTP-binding positions include 152–154 (DIE), 192–197 (KTKPTQ), and Lys-228. UTP contacts are provided by residues 192–197 (KTKPTQ) and Lys-228. Residues 296-545 (TIALVGKYVD…IRAALLHRCP (250 aa)) enclose the Glutamine amidotransferase type-1 domain. Gly-359 serves as a coordination point for L-glutamine. Residue Cys-386 is the Nucleophile; for glutamine hydrolysis of the active site. L-glutamine-binding positions include 387 to 390 (LGLQ), Glu-410, and Arg-471. Catalysis depends on residues His-518 and Glu-520.

This sequence belongs to the CTP synthase family. Homotetramer.

It carries out the reaction UTP + L-glutamine + ATP + H2O = CTP + L-glutamate + ADP + phosphate + 2 H(+). The catalysed reaction is L-glutamine + H2O = L-glutamate + NH4(+). The enzyme catalyses UTP + NH4(+) + ATP = CTP + ADP + phosphate + 2 H(+). It participates in pyrimidine metabolism; CTP biosynthesis via de novo pathway; CTP from UDP: step 2/2. With respect to regulation, allosterically activated by GTP, when glutamine is the substrate; GTP has no effect on the reaction when ammonia is the substrate. The allosteric effector GTP functions by stabilizing the protein conformation that binds the tetrahedral intermediate(s) formed during glutamine hydrolysis. Inhibited by the product CTP, via allosteric rather than competitive inhibition. In terms of biological role, catalyzes the ATP-dependent amination of UTP to CTP with either L-glutamine or ammonia as the source of nitrogen. Regulates intracellular CTP levels through interactions with the four ribonucleotide triphosphates. The sequence is that of CTP synthase from Acidothermus cellulolyticus (strain ATCC 43068 / DSM 8971 / 11B).